The sequence spans 231 residues: Phosphatidate cytidylyltransferase (231 aa).

Helical transmembrane passes span 33-53 (FVVA…LVAI), 67-87 (IMYL…LIFL), 95-115 (WLIM…MIGG), 133-153 (WSGL…ISFI), 167-187 (IYLF…DLFI), and 206-226 (HGGV…LFFI).

It belongs to the CDS family.

It localises to the cell membrane. The enzyme catalyses a 1,2-diacyl-sn-glycero-3-phosphate + CTP + H(+) = a CDP-1,2-diacyl-sn-glycerol + diphosphate. The protein operates within phospholipid metabolism; CDP-diacylglycerol biosynthesis; CDP-diacylglycerol from sn-glycerol 3-phosphate: step 3/3. This chain is Phosphatidate cytidylyltransferase (cdsA), found in Rickettsia bellii (strain RML369-C).